Consider the following 231-residue polypeptide: Large ribosomal subunit protein uL1 (231 aa).

This sequence belongs to the universal ribosomal protein uL1 family. In terms of assembly, part of the 50S ribosomal subunit.

Functionally, binds directly to 23S rRNA. The L1 stalk is quite mobile in the ribosome, and is involved in E site tRNA release. In terms of biological role, protein L1 is also a translational repressor protein, it controls the translation of the L11 operon by binding to its mRNA. The polypeptide is Large ribosomal subunit protein uL1 (Gluconacetobacter diazotrophicus (strain ATCC 49037 / DSM 5601 / CCUG 37298 / CIP 103539 / LMG 7603 / PAl5)).